We begin with the raw amino-acid sequence, 505 residues long: L-carnitine/gamma-butyrobetaine antiporter (505 aa).

A run of 12 helical transmembrane segments spans residues 10-30, 51-71, 92-112, 143-163, 195-215, 231-251, 263-283, 316-336, 347-367, 403-423, 446-466, and 475-495; these read IEPK…WLTV, WGWA…WLVF, IFMM…SIEI, GPLP…FFFV, FYLV…TPLV, LDAI…ACGL, SYLS…SFIM, WTVF…IFLA, LCFG…TVLG, LSTA…VTLI, LLVR…LLAL, and AIIA…LSFI.

The protein belongs to the BCCT transporter (TC 2.A.15) family. CaiT subfamily. As to quaternary structure, homotrimer.

It localises to the cell inner membrane. It catalyses the reaction 4-(trimethylamino)butanoate(in) + (R)-carnitine(out) = 4-(trimethylamino)butanoate(out) + (R)-carnitine(in). It participates in amine and polyamine metabolism; carnitine metabolism. Its function is as follows. Catalyzes the exchange of L-carnitine for gamma-butyrobetaine. The polypeptide is L-carnitine/gamma-butyrobetaine antiporter (Salmonella gallinarum (strain 287/91 / NCTC 13346)).